Consider the following 701-residue polypeptide: Ribosomal RNA large subunit methyltransferase K/L (701 aa).

Positions 43–155 constitute a THUMP domain; that stretch reads LLYKSLMWSR…NNILHIMLDL (113 aa).

The protein belongs to the methyltransferase superfamily. RlmKL family.

The protein resides in the cytoplasm. It carries out the reaction guanosine(2445) in 23S rRNA + S-adenosyl-L-methionine = N(2)-methylguanosine(2445) in 23S rRNA + S-adenosyl-L-homocysteine + H(+). The enzyme catalyses guanosine(2069) in 23S rRNA + S-adenosyl-L-methionine = N(2)-methylguanosine(2069) in 23S rRNA + S-adenosyl-L-homocysteine + H(+). Functionally, specifically methylates the guanine in position 2445 (m2G2445) and the guanine in position 2069 (m7G2069) of 23S rRNA. In Buchnera aphidicola subsp. Acyrthosiphon pisum (strain APS) (Acyrthosiphon pisum symbiotic bacterium), this protein is Ribosomal RNA large subunit methyltransferase K/L.